Here is a 369-residue protein sequence, read N- to C-terminus: Trichocyst matrix protein T1-B (369 aa).

A signal peptide spans 1 to 16 (MYKLAVCTLLILSVTA). Residues 17 to 55 (IDVTNSVWTSHDQKAFAQIKQSGWGNFILNFGELHLQTG) constitute a propeptide that is removed on maturation. The stretch at 56–180 (GILAELNTEI…AIDESLQLLS (125 aa)) forms a coiled coil. Residues 190–225 (IQKVQKNLTKIQQSLKRHSTFQTFIKTLLEIAVEAN) constitute a propeptide that is removed on maturation. The stretch at 262–354 (KDFEARVIQL…AHQALDLLNQ (93 aa)) forms a coiled coil.

It belongs to the TMP family. In terms of processing, two components are produced by post-translational processing from the precursor peptide.

The protein localises to the trichocyst. In terms of biological role, structural protein that crystallize inside the trichocyst matrix. The protein is Trichocyst matrix protein T1-B (T1B) of Paramecium tetraurelia.